We begin with the raw amino-acid sequence, 152 residues long: Ribosome maturation factor RimP (152 aa).

The protein belongs to the RimP family.

The protein localises to the cytoplasm. Its function is as follows. Required for maturation of 30S ribosomal subunits. The sequence is that of Ribosome maturation factor RimP from Clostridium beijerinckii (strain ATCC 51743 / NCIMB 8052) (Clostridium acetobutylicum).